The primary structure comprises 459 residues: MDLTAPLADTIAAIATAVVPEQGSIGIVRLSGSRALAIAQAIFTPARRNAVWESHRLLYGWIHDEKGRRLDEALAVWMQAPRSYTREDVVELHCHGGIMVVQATLQQCLRQGARLAQPGEFSLRAFLNGRIDLTQAESVADLVAARSPQAAQMALAGLQGKLGQSIRALRQELLGLLAEIEARLDFEEDLPPLDVPAWQARLQDIQAQMQALLATAERGQLLRTGVKVAIVGRPNVGKSSLLNAWSGQDRAIVTDLPGTTRDVVESQLVVRGIPVQLLDTAGIRATDDPVERLGVERSQRLAQTADVLVLVIDAQAGWTEADAAIYASIRHRPLILVINKTDLAPADKIRLPPEIAYRVPAVAAQGQGIPELEEALEQLVTQGRPQPNLEVSLNQRQAAALRQAQASLEQVVQAMQAQLPLDFWTIDLRGALHALGQITGEEISEAVLDQIFSRFCIGK.

Residues Arg-29, Glu-91, and Arg-130 each coordinate (6S)-5-formyl-5,6,7,8-tetrahydrofolate. The 157-residue stretch at Gly-225–Thr-381 folds into the TrmE-type G domain. K(+) is bound at residue Asn-235. GTP contacts are provided by residues Asn-235–Ser-240, Thr-254–Thr-260, and Asp-279–Gly-282. Position 239 (Ser-239) interacts with Mg(2+). 3 residues coordinate K(+): Thr-254, Leu-256, and Thr-259. Thr-260 provides a ligand contact to Mg(2+). (6S)-5-formyl-5,6,7,8-tetrahydrofolate is bound at residue Lys-459.

Belongs to the TRAFAC class TrmE-Era-EngA-EngB-Septin-like GTPase superfamily. TrmE GTPase family. In terms of assembly, homodimer. Heterotetramer of two MnmE and two MnmG subunits. Requires K(+) as cofactor.

Its subcellular location is the cytoplasm. Exhibits a very high intrinsic GTPase hydrolysis rate. Involved in the addition of a carboxymethylaminomethyl (cmnm) group at the wobble position (U34) of certain tRNAs, forming tRNA-cmnm(5)s(2)U34. The sequence is that of tRNA modification GTPase MnmE from Synechococcus sp. (strain JA-3-3Ab) (Cyanobacteria bacterium Yellowstone A-Prime).